The sequence spans 103 residues: Large ribosomal subunit protein bL21 (103 aa).

This sequence belongs to the bacterial ribosomal protein bL21 family. Part of the 50S ribosomal subunit. Contacts protein L20.

This protein binds to 23S rRNA in the presence of protein L20. This Ruminiclostridium cellulolyticum (strain ATCC 35319 / DSM 5812 / JCM 6584 / H10) (Clostridium cellulolyticum) protein is Large ribosomal subunit protein bL21.